We begin with the raw amino-acid sequence, 626 residues long: Putative L-type lectin-domain containing receptor kinase V.8 (626 aa).

An N-terminal signal peptide occupies residues 1–21; sequence MPSELKVLHIVLVLLYTLSSS. Positions 22 to 212 are legume-lectin like; that stretch reads TYNSNGNWTL…SIGAFHYMLS (191 aa). Topologically, residues 22-245 are extracellular; sequence TYNSNGNWTL…PKKSSDRTKK (224 aa). 4 N-linked (GlcNAc...) asparagine glycosylation sites follow: Asn28, Asn59, Asn112, and Asn162. A helical membrane pass occupies residues 246–266; it reads ILAVCLTLAVFAVFVASGICF. Residues 267-626 are Cytoplasmic-facing; the sequence is VFYTRHKKVK…LTNSFLSHGR (360 aa). In terms of domain architecture, Protein kinase spans 303-562; sequence FKEKQLLGKG…GLLCAHHTEL (260 aa). ATP is bound by residues 309–317 and Lys332; that span reads LGKGGFGQV. Asp429 acts as the Proton acceptor in catalysis.

The protein in the C-terminal section; belongs to the protein kinase superfamily. Ser/Thr protein kinase family. It in the N-terminal section; belongs to the leguminous lectin family.

It is found in the cell membrane. It carries out the reaction L-seryl-[protein] + ATP = O-phospho-L-seryl-[protein] + ADP + H(+). The catalysed reaction is L-threonyl-[protein] + ATP = O-phospho-L-threonyl-[protein] + ADP + H(+). In Arabidopsis thaliana (Mouse-ear cress), this protein is Putative L-type lectin-domain containing receptor kinase V.8 (LECRK58).